A 541-amino-acid chain; its full sequence is Atlastin (541 aa).

Residues M1 to A424 are Cytoplasmic-facing. Positions D35–N284 constitute a GB1/RHD3-type G domain. GDP contacts are provided by R48, K49, G50, K51, and S52. Positions 48, 49, 50, 51, 52, and 53 each coordinate GTP. Residue S52 participates in Mg(2+) binding. Residue D121 coordinates Mg(2+). GDP contacts are provided by R192, D193, and V251. GTP-binding residues include R192, D193, and V251. The segment at M322–S413 is 3HB (three-helix bundle) domain. Residues K414–T422 are linker. Residues V425 to L445 form a helical membrane-spanning segment. Over Y446–F448 the chain is Lumenal. The chain crosses the membrane as a helical span at residues A449–I469. The Cytoplasmic segment spans residues R470–S541. Phosphothreonine is present on T514.

This sequence belongs to the TRAFAC class dynamin-like GTPase superfamily. GB1/RHD3 GTPase family. GB1 subfamily. As to quaternary structure, monomeric and homodimeric. The homodimer, transiently formed by two molecules on opposing membranes, is the active form mediating ER membrane fusion. Interacts with spas; interaction may regulate microtubule dynamics. In terms of tissue distribution, ubiquitously expressed.

The protein resides in the endoplasmic reticulum membrane. The protein localises to the golgi apparatus membrane. The enzyme catalyses GTP + H2O = GDP + phosphate + H(+). In terms of biological role, membrane-anchored GTPase that mediates the GTP-dependent fusion of endoplasmic reticulum (ER) membranes, maintaining the continuous ER network. It facilitates the formation of three-way junctions where ER tubules intersect. Two atlastin-1 on neighboring ER tubules bind GTP and form loose homodimers through the GB1/RHD3-type G domains and 3HB regions. Upon GTP hydrolysis, the 3HB regions tighten, pulling the membranes together to drive their fusion. After fusion, the homodimer disassembles upon release of inorganic phosphate (Pi). Subsequently, GDP dissociates, resetting the monomers to a conformation ready for a new fusion cycle. May also regulate more or less directly Golgi biogenesis. May also regulate microtubule polymerization and Golgi biogenesis. Required for dopaminergic neurons survival and the growth of muscles and synapses at neuromuscular junctions. In Drosophila melanogaster (Fruit fly), this protein is Atlastin (atl).